Here is a 276-residue protein sequence, read N- to C-terminus: NH(3)-dependent NAD(+) synthetase (276 aa).

43-50 (GISGGVDS) contacts ATP. Position 49 (Asp-49) interacts with Mg(2+). Arg-146 contributes to the deamido-NAD(+) binding site. Residue Thr-166 participates in ATP binding. Glu-171 serves as a coordination point for Mg(2+). Deamido-NAD(+) contacts are provided by Lys-179 and Asp-186. Positions 195 and 217 each coordinate ATP. Deamido-NAD(+) is bound at residue 266–267 (HK).

Belongs to the NAD synthetase family. Homodimer.

It carries out the reaction deamido-NAD(+) + NH4(+) + ATP = AMP + diphosphate + NAD(+) + H(+). The protein operates within cofactor biosynthesis; NAD(+) biosynthesis; NAD(+) from deamido-NAD(+) (ammonia route): step 1/1. Functionally, catalyzes the ATP-dependent amidation of deamido-NAD to form NAD. Uses ammonia as a nitrogen source. The chain is NH(3)-dependent NAD(+) synthetase from Shewanella halifaxensis (strain HAW-EB4).